The following is a 638-amino-acid chain: Sodium- and chloride-dependent glycine transporter 1 (638 aa).

The interval 1-29 is disordered; sequence MAAAQGPVAPSSLEQNGAVPSEATKKDQN. The Cytoplasmic portion of the chain corresponds to 1–40; it reads MAAAQGPVAPSSLEQNGAVPSEATKKDQNLKRGNWGNQIE. The next 3 membrane-spanning stretches (helical) occupy residues 41–61, 69–88, and 112–132; these read FVLT…FPYL, AFMF…LFFM, and GVGY…NVVI. Over 133-219 the chain is Extracellular; that stretch reads CIAFYYFFSS…DDIGNFGEVR (87 aa). N-linked (GlcNAc...) asparagine glycosylation is found at Asn-169, Asn-172, Asn-182, and Asn-188. The next 9 membrane-spanning stretches (helical) occupy residues 220–238, 247–264, 300–317, 329–350, 383–402, 431–449, 465–485, 506–525, and 544–562; these read LPLL…LCLI, VVYF…ILFI, IFYS…MASY, VIIS…FSIL, LPIS…LLGL, YVTL…PLTS, SFSL…IYGH, ICWR…FSVI, and IGFL…YALF. Over 563–638 the chain is Cytoplasmic; it reads QFCRTDGDTL…GSSRFQDSRI (76 aa). The tract at residues 597–638 is disordered; sequence RYAPTTTPSPEDGLEVQPLHPDKAQIPMVGSNGSSRFQDSRI. Residue Thr-603 is modified to Phosphothreonine. Ser-605 and Ser-630 each carry phosphoserine. The segment at 627-638 is essential for interaction with EXOC1; it reads SNGSSRFQDSRI. A compositionally biased stretch (polar residues) spans 627-638; it reads SNGSSRFQDSRI.

Belongs to the sodium:neurotransmitter symporter (SNF) (TC 2.A.22) family. SLC6A9 subfamily. Interacts with EXOC1; interaction increases the transporter capacity of SLC6A9 probably by promoting its insertion into the cell membrane. Interacts with EXOC3 and EXOC4.

The protein resides in the cell membrane. The enzyme catalyses glycine(out) + chloride(out) + 2 Na(+)(out) = glycine(in) + chloride(in) + 2 Na(+)(in). Sodium- and chloride-dependent glycine transporter which is essential for regulating glycine concentrations at inhibitory glycinergic synapses. The protein is Sodium- and chloride-dependent glycine transporter 1 (SLC6A9) of Bos taurus (Bovine).